Consider the following 101-residue polypeptide: MDIKILKDKNNSLLNRRELDFVVKYEGSTPSRSDVRNKLAAMLNAPLELLIIQRIKTEYGMQESKGYAKVYADEARMKQVEQEYILKRNPAPGAEAEEEEA.

The protein belongs to the eukaryotic ribosomal protein eS24 family.

In Methanosarcina acetivorans (strain ATCC 35395 / DSM 2834 / JCM 12185 / C2A), this protein is Small ribosomal subunit protein eS24.